Here is a 406-residue protein sequence, read N- to C-terminus: DNA-binding transcriptional repressor Mlc (406 aa).

A DNA-binding region (H-T-H motif) is located at residues 33–42; sequence RIDLSRLAQL. Residues His-247, Cys-257, Cys-259, and Cys-264 each coordinate Zn(2+).

Belongs to the ROK (NagC/XylR) family. In terms of assembly, homodimer. Homotetramer. There is probably an equilibrium between the dimeric and the tetrameric form. Interacts with dephosphorylated PtsG. Mlc and PtsG EIIB domain form a complex with the 1:1 stoichiometry. Interacts with MtfA.

Its subcellular location is the cytoplasm. With respect to regulation, activity is modulated by glucose. In the presence of glucose, is inhibited by interaction with the dephosphorylated form of PtsG, which sequesters Mlc in the inner membrane and prevents Mlc binding to its target promoters. The restriction of conformational freedom resulting from the anchoring of four ends of Mlc to the membrane could be the primary cause of its loss of DNA-binding activity in vivo. Activity is also inhibited by interaction with the Mlc titration factor A (mtfA). The inactivation mechanisms of Mlc by dephosphorylated PtsG and MtfA differ significantly. In terms of biological role, global regulator of carbohydrate metabolism. Represses the expression of several genes involved in sugar transport and utilization, in particular phosphoenolpyruvate-carbohydrate phosphotransferase system (PTS) genes. Represses expression of ptsG (EIICB(Glc)), which encodes the PTS system glucose-specific EIICB component. Also represses the expression of the manXYZ operon, encoding the mannose-specific PTS system, expression of malT, encoding the transcriptional activator of the maltose regulon, and expression of the pts operon, composed of the genes ptsH, ptsI and crr. Represses its own expression. Acts by binding to the regulatory region of the target genes. The chain is DNA-binding transcriptional repressor Mlc from Escherichia coli (strain K12).